The following is a 631-amino-acid chain: KIF-binding protein (631 aa).

The segment covering E60–C70 has biased composition (acidic residues). Residues E60–F88 form a disordered region.

The protein belongs to the KIF-binding protein family. As to expression, at 30 hpf, primarily expressed in central and peripheral neurons.

Its subcellular location is the cytoplasm. It is found in the cytoskeleton. In terms of biological role, activator of KIF1B plus-end-directed microtubule motor activity. Required for organization of axonal microtubules, and axonal outgrowth and maintenance during peripheral and central nervous system development. This is KIF-binding protein (kifbp) from Danio rerio (Zebrafish).